The primary structure comprises 152 residues: Ribosome maturation factor RimP (152 aa).

The protein belongs to the RimP family.

The protein localises to the cytoplasm. In terms of biological role, required for maturation of 30S ribosomal subunits. The protein is Ribosome maturation factor RimP of Alkalilimnicola ehrlichii (strain ATCC BAA-1101 / DSM 17681 / MLHE-1).